The primary structure comprises 141 residues: Nucleoside diphosphate kinase (141 aa).

Residues K10, F58, R86, T92, R103, and N113 each coordinate ATP. H116 (pros-phosphohistidine intermediate) is an active-site residue.

The protein belongs to the NDK family. In terms of assembly, homotetramer. The cofactor is Mg(2+).

The protein localises to the cytoplasm. It catalyses the reaction a 2'-deoxyribonucleoside 5'-diphosphate + ATP = a 2'-deoxyribonucleoside 5'-triphosphate + ADP. The enzyme catalyses a ribonucleoside 5'-diphosphate + ATP = a ribonucleoside 5'-triphosphate + ADP. Its function is as follows. Major role in the synthesis of nucleoside triphosphates other than ATP. The ATP gamma phosphate is transferred to the NDP beta phosphate via a ping-pong mechanism, using a phosphorylated active-site intermediate. The protein is Nucleoside diphosphate kinase of Ehrlichia canis (strain Jake).